The following is a 73-amino-acid chain: Waprin-Phi2 (73 aa).

The first 21 residues, 1-21, serve as a signal peptide directing secretion; the sequence is MKATLLLLLLFAVILPGTISA. The region spanning 22–72 is the WAP domain; sequence EQEKPGSCPNVDMPIPPLGLCKTTCSKDSDCSETKKCCKNGCGFMTCTTAR. Cystine bridges form between C29–C59, C42–C63, C46–C58, and C52–C68.

This sequence belongs to the venom waprin family. As to expression, expressed by the venom gland.

The protein localises to the secreted. Its function is as follows. Damages membranes of susceptible bacteria. Has no hemolytic activity. Not toxic to mice. Does not inhibit the proteinases elastase and cathepsin G. The protein is Waprin-Phi2 of Philodryas olfersii (Green snake).